We begin with the raw amino-acid sequence, 341 residues long: NADH-ubiquinone oxidoreductase chain 2 (341 aa).

Transmembrane regions (helical) follow at residues 8-28 (IFLIMLIFGTLVTISSNSWLG), 61-81 (FLTQAFASSILLFAIIMLMFL), 95-115 (ILILSTLLLKSGAAPFHFWFP), 145-165 (FIYNFFMISIILSMLIGSLGG), 174-191 (LMAFSSINHLGWMLLAMM), 195-215 (MLWMTYFLMYSLLSFSIVLMF), 238-258 (LLIFLNLLSLGGLPPFLGFLP), 272-292 (LFILTISVCLTLITLYFYLRL), and 321-341 (LIFNFISIGGLVMISMIYIIM).

This sequence belongs to the complex I subunit 2 family.

It is found in the mitochondrion inner membrane. It catalyses the reaction a ubiquinone + NADH + 5 H(+)(in) = a ubiquinol + NAD(+) + 4 H(+)(out). Its function is as follows. Core subunit of the mitochondrial membrane respiratory chain NADH dehydrogenase (Complex I) that is believed to belong to the minimal assembly required for catalysis. Complex I functions in the transfer of electrons from NADH to the respiratory chain. The immediate electron acceptor for the enzyme is believed to be ubiquinone. This chain is NADH-ubiquinone oxidoreductase chain 2 (mt:ND2), found in Anopheles gambiae (African malaria mosquito).